The chain runs to 255 residues: Hydroxyacylglutathione hydrolase (255 aa).

Positions 53, 55, 57, 58, 110, 127, and 165 each coordinate Zn(2+).

This sequence belongs to the metallo-beta-lactamase superfamily. Glyoxalase II family. As to quaternary structure, monomer. Zn(2+) serves as cofactor.

It catalyses the reaction an S-(2-hydroxyacyl)glutathione + H2O = a 2-hydroxy carboxylate + glutathione + H(+). It functions in the pathway secondary metabolite metabolism; methylglyoxal degradation; (R)-lactate from methylglyoxal: step 2/2. In terms of biological role, thiolesterase that catalyzes the hydrolysis of S-D-lactoyl-glutathione to form glutathione and D-lactic acid. This chain is Hydroxyacylglutathione hydrolase, found in Xanthomonas campestris pv. campestris (strain 8004).